The primary structure comprises 251 residues: Probable transcriptional regulatory protein BLA_1344 (251 aa).

It belongs to the TACO1 family.

It is found in the cytoplasm. This chain is Probable transcriptional regulatory protein BLA_1344, found in Bifidobacterium animalis subsp. lactis (strain AD011).